The chain runs to 358 residues: Hsp70/Hsp90 co-chaperone cns1 (358 aa).

TPR repeat units lie at residues 64-97 (AQNF…KCGD), 102-135 (IACY…DSTH), 136-169 (AKAY…HPND), and 221-255 (TEHP…YPLV).

The protein belongs to the TTC4 family. In terms of assembly, monomer. Component of Hsp70 and Hsp90 chaperone complexes.

It is found in the cytoplasm. The protein localises to the nucleus. Its function is as follows. Co-chaperone that binds to the molecular chaperones Hsp90 and Hsp70. Stimulates Hsp70 ATPase activity, but not Hsp90 ATPase activity. Involved in only a subset of Hsp90 functions. The chain is Hsp70/Hsp90 co-chaperone cns1 (cns1) from Schizosaccharomyces pombe (strain 972 / ATCC 24843) (Fission yeast).